The following is a 210-amino-acid chain: HTH-type transcriptional regulator TtgR (210 aa).

An HTH tetR-type domain is found at 10-70 (QETRAQIIEA…ALLDSLHETH (61 aa)). The H-T-H motif DNA-binding region spans 33–52 (TLADIAELAGVTRGAIYWHF).

Homodimer.

Its function is as follows. Represses expression from the ttgABC operon promoter and its own expression. Binds to a promoter region between the divergently transcribed ttgR and ttgABC genes/operons; in the presence of chloramphenicol or tetracycline this binding no longer occurs and ttgR and ttgABC are derepressed. This suggests that TtgR binds these antibiotics. The chain is HTH-type transcriptional regulator TtgR (ttgR) from Pseudomonas putida (strain DOT-T1E).